A 408-amino-acid chain; its full sequence is 1-deoxy-D-xylulose 5-phosphate reductoisomerase (408 aa).

NADPH is bound by residues Thr27, Gly28, Ser29, Ile30, Ala53, Arg54, Asn55, and Asn140. Lys141 contacts 1-deoxy-D-xylulose 5-phosphate. Glu142 is an NADPH binding site. Residue Asp166 coordinates Mn(2+). 1-deoxy-D-xylulose 5-phosphate-binding residues include Ser167, Glu168, Ser192, and His215. A Mn(2+)-binding site is contributed by Glu168. Gly221 lines the NADPH pocket. 4 residues coordinate 1-deoxy-D-xylulose 5-phosphate: Ser228, Asn233, Lys234, and Glu237. Residue Glu237 coordinates Mn(2+).

The protein belongs to the DXR family. The cofactor is Mg(2+). Requires Mn(2+) as cofactor.

It carries out the reaction 2-C-methyl-D-erythritol 4-phosphate + NADP(+) = 1-deoxy-D-xylulose 5-phosphate + NADPH + H(+). Its pathway is isoprenoid biosynthesis; isopentenyl diphosphate biosynthesis via DXP pathway; isopentenyl diphosphate from 1-deoxy-D-xylulose 5-phosphate: step 1/6. Its function is as follows. Catalyzes the NADPH-dependent rearrangement and reduction of 1-deoxy-D-xylulose-5-phosphate (DXP) to 2-C-methyl-D-erythritol 4-phosphate (MEP). The sequence is that of 1-deoxy-D-xylulose 5-phosphate reductoisomerase from Nitratidesulfovibrio vulgaris (strain DP4) (Desulfovibrio vulgaris).